Here is a 367-residue protein sequence, read N- to C-terminus: Large ribosomal subunit protein mL38 (367 aa).

A mitochondrion-targeting transit peptide spans 1-29 (MLRRSIHTTKILQKPNATSHIWSDFTTRP).

It belongs to the phosphatidylethanolamine-binding protein family. Mitochondrion-specific ribosomal protein mL38 subfamily. In terms of assembly, component of the mitochondrial large ribosomal subunit (mt-LSU). Mature yeast 74S mitochondrial ribosomes consist of a small (37S) and a large (54S) subunit. The 37S small subunit contains a 15S ribosomal RNA (15S mt-rRNA) and 34 different proteins. The 54S large subunit contains a 21S rRNA (21S mt-rRNA) and 46 different proteins.

The protein resides in the mitochondrion. Functionally, component of the mitochondrial ribosome (mitoribosome), a dedicated translation machinery responsible for the synthesis of mitochondrial genome-encoded proteins, including at least some of the essential transmembrane subunits of the mitochondrial respiratory chain. The mitoribosomes are attached to the mitochondrial inner membrane and translation products are cotranslationally integrated into the membrane. The chain is Large ribosomal subunit protein mL38 (MRPL35) from Saccharomyces cerevisiae (strain ATCC 204508 / S288c) (Baker's yeast).